A 446-amino-acid chain; its full sequence is Hepatocyte nuclear factor 4-beta (446 aa).

The segment at residues 47–122 (NSFCAICGDR…AGMKKEAVQN (76 aa)) is a DNA-binding region (nuclear receptor). 2 consecutive NR C4-type zinc fingers follow at residues 50–70 (CAIC…CDGC) and 86–110 (CRFS…LRKC). The 230-residue stretch at 137–366 (NGSLSINVLT…SLLQELLLGG (230 aa)) folds into the NR LBD domain.

It belongs to the nuclear hormone receptor family. NR2 subfamily. Homodimerization is required for HNF4-alpha to bind to its recognition site. As to expression, expressed in liver, kidney, stomach, intestine, lung, ovary, and testis. Not expressed in fat, muscle and brain.

It localises to the nucleus. Functionally, transcription factor; binds and activates the promoter for the HNF1-alpha gene. Seems to have a lower DNA binding activity than HNF4-alpha and is a weaker transactivator than the alpha isoform. The chain is Hepatocyte nuclear factor 4-beta (hnf4b) from Xenopus laevis (African clawed frog).